Reading from the N-terminus, the 462-residue chain is MSARLPALWKRLSSTISPRPAPPKAHHHAPIREAAFPNGYVLTGLHCGIKKTGALDLAVILSTTPKPASAAACFTRNAFKAAPVVVSEEVLQRSASTARALVVNSGCANAVTGKQGMEDAWAMVRATDALLGHSAKESETLVMSTGVIGQTLPICKVLAGIESQSSDSQTKSLGSDFTAWERAAKAFMTTDTFPKLRARTFSIDGREYKMAGMDKGAGMIHPDMGPPRMAGQLHATLLGCIMTDAAVSPRSLQSALTYAVDRSFNSISVDGDMSTNDTIVVLANGSAASDPAAEIDEERDPRTYQIFRDELTTFAADLAQLVVRDGEGATKFVTVSVNGAATYEDAHRIASRISTSALVKTALYGQDANWGRILAATGSVPLSVPIDPTRVSVSFIPTDGSPALPLLVNGEPETVDEARAKEIISVEDLEIEVQLGIGSENAKYWTCDFSYEYVRINGDYRS.

The substrate site is built by threonine 189, lysine 215, threonine 236, glutamate 327, asparagine 457, and serine 462. Threonine 236 (nucleophile) is an active-site residue.

The protein belongs to the ArgJ family. Heterodimer of an alpha and a beta chain. Post-translationally, the alpha and beta chains are autoproteolytically processed from a single precursor protein within the mitochondrion.

Its subcellular location is the mitochondrion matrix. The enzyme catalyses N(2)-acetyl-L-ornithine + L-glutamate = N-acetyl-L-glutamate + L-ornithine. It catalyses the reaction L-glutamate + acetyl-CoA = N-acetyl-L-glutamate + CoA + H(+). It functions in the pathway amino-acid biosynthesis; L-arginine biosynthesis; L-ornithine and N-acetyl-L-glutamate from L-glutamate and N(2)-acetyl-L-ornithine (cyclic): step 1/1. Its pathway is amino-acid biosynthesis; L-arginine biosynthesis; N(2)-acetyl-L-ornithine from L-glutamate: step 1/4. Its function is as follows. Catalyzes two activities which are involved in the cyclic version of arginine biosynthesis: the synthesis of acetylglutamate from glutamate and acetyl-CoA, and of ornithine by transacetylation between acetylornithine and glutamate. In Postia placenta (strain ATCC 44394 / Madison 698-R) (Brown rot fungus), this protein is Arginine biosynthesis bifunctional protein ArgJ, mitochondrial.